Here is a 110-residue protein sequence, read N- to C-terminus: Thiosulfate sulfurtransferase GlpE (110 aa).

The 89-residue stretch at 17–105 (HQGKAVLVDI…WHRHFPAEVE (89 aa)) folds into the Rhodanese domain. Cys-65 serves as the catalytic Cysteine persulfide intermediate.

This sequence belongs to the GlpE family.

It localises to the cytoplasm. It catalyses the reaction thiosulfate + hydrogen cyanide = thiocyanate + sulfite + 2 H(+). The enzyme catalyses thiosulfate + [thioredoxin]-dithiol = [thioredoxin]-disulfide + hydrogen sulfide + sulfite + 2 H(+). Functionally, transferase that catalyzes the transfer of sulfur from thiosulfate to thiophilic acceptors such as cyanide or dithiols. May function in a CysM-independent thiosulfate assimilation pathway by catalyzing the conversion of thiosulfate to sulfite, which can then be used for L-cysteine biosynthesis. The protein is Thiosulfate sulfurtransferase GlpE of Enterobacter sp. (strain 638).